Here is a 413-residue protein sequence, read N- to C-terminus: Corticotropin-releasing factor receptor 2 (413 aa).

The segment at residues Met-1–Ala-22 is a signal peptide (not cleaved). Over Met-1–Lys-110 the chain is Extracellular. Asn-16 carries an N-linked (GlcNAc...) asparagine glycan. 3 disulfide bridges follow: Cys-17/Cys-53, Cys-43/Cys-86, and Cys-67/Cys-101. N-linked (GlcNAc...) asparagine glycosylation is found at Asn-77, Asn-89, and Asn-97. Residues Tyr-111–Leu-141 traverse the membrane as a helical segment. Over Cys-142–Cys-148 the chain is Cytoplasmic. Residues Leu-149–Met-173 traverse the membrane as a helical segment. Residues Ile-174 to Arg-187 are Extracellular-facing. A disulfide bridge links Cys-186 with Cys-256. The chain crosses the membrane as a helical span at residues Cys-188 to Val-216. The Cytoplasmic segment spans residues Met-217–Lys-223. A helical transmembrane segment spans residues Leu-224–Tyr-251. Residues Glu-252–Asp-267 are Extracellular-facing. The helical transmembrane segment at Tyr-268 to Met-293 threads the bilayer. The Cytoplasmic portion of the chain corresponds to Thr-294–Thr-304. Residues Ile-305–Phe-329 form a helical membrane-spanning segment. The Extracellular portion of the chain corresponds to Val-330 to Asp-336. The chain crosses the membrane as a helical span at residues Val-337–Gly-366. At Glu-367–Val-413 the chain is on the cytoplasmic side.

This sequence belongs to the G-protein coupled receptor 2 family. In terms of processing, a N-glycosylation site within the signal peptide impedes its proper cleavage and function.

The protein resides in the cell membrane. Its function is as follows. G-protein coupled receptor for CRH (corticotropin-releasing factor), UCN (urocortin), UCN2 and UCN3. Has high affinity for UCN. Ligand binding causes a conformation change that triggers signaling via guanine nucleotide-binding proteins (G proteins) and down-stream effectors, such as adenylate cyclase. Promotes the activation of adenylate cyclase, leading to increased intracellular cAMP levels. The polypeptide is Corticotropin-releasing factor receptor 2 (crhr2) (Xenopus laevis (African clawed frog)).